Reading from the N-terminus, the 54-residue chain is Small ribosomal subunit protein uS14 (54 aa).

Cysteine 19, cysteine 22, cysteine 37, and cysteine 40 together coordinate Zn(2+).

Belongs to the universal ribosomal protein uS14 family. Zinc-binding uS14 subfamily. Part of the 30S ribosomal subunit. It depends on Zn(2+) as a cofactor.

Its function is as follows. Binds 16S rRNA, required for the assembly of 30S particles. The sequence is that of Small ribosomal subunit protein uS14 from Pyrobaculum aerophilum (strain ATCC 51768 / DSM 7523 / JCM 9630 / CIP 104966 / NBRC 100827 / IM2).